The sequence spans 1111 residues: Putative leucine--tRNA ligase, cytoplasmic (1111 aa).

Positions 74-84 (PYMNGALHLGH) match the 'HIGH' region motif. S460 is modified (phosphoserine). The 'KMSKS' region signature appears at 737–741 (KMSKS). An ATP-binding site is contributed by K740.

It belongs to the class-I aminoacyl-tRNA synthetase family.

It localises to the cytoplasm. The enzyme catalyses tRNA(Leu) + L-leucine + ATP = L-leucyl-tRNA(Leu) + AMP + diphosphate. In Schizosaccharomyces pombe (strain 972 / ATCC 24843) (Fission yeast), this protein is Putative leucine--tRNA ligase, cytoplasmic (lrs1).